The following is a 156-amino-acid chain: Small ribosomal subunit protein uS7 (156 aa).

The protein belongs to the universal ribosomal protein uS7 family. In terms of assembly, part of the 30S ribosomal subunit. Contacts proteins S9 and S11.

One of the primary rRNA binding proteins, it binds directly to 16S rRNA where it nucleates assembly of the head domain of the 30S subunit. Is located at the subunit interface close to the decoding center, probably blocks exit of the E-site tRNA. The chain is Small ribosomal subunit protein uS7 from Paenarthrobacter aurescens (strain TC1).